The following is a 209-amino-acid chain: MKKVRLKELESRLQQVDGFEKPKLLLEQYPTRPHIAACMLYTIHNTYDDIENKVVADLGCGCGVLSIGTAMLGAGLCVGFDIDEDALEIFNRNAEEFELTNIDMVQCDVCLLSNRMSKSFDTVIMNPPFGTKNNKGTDMAFLKTALEMARTAVYSLHKSSTREHVQKKAAEWKIKIDIIAELRYDLPASYKFHKKKSVDIEVDLIRFSF.

Residues glutamine 28, threonine 31, glycine 59, cysteine 62, valine 64, aspartate 81, and 108 to 109 (DV) contribute to the S-adenosyl-L-methionine site.

The protein belongs to the methyltransferase superfamily. PrmA family. In terms of assembly, heterodimer; heterodimerizes with TRMT112. In terms of tissue distribution, expressed from very early development (8 post-conceptual weeks) and expression persists through adulthood in multiple substructures of the brain, including the cerebellar cortex, hippocampus, and striatum.

It localises to the nucleus. The protein localises to the presynapse. The protein resides in the postsynapse. The catalysed reaction is adenosine(1832) in 18S rRNA + S-adenosyl-L-methionine = N(6)-methyladenosine(1832) in 18S rRNA + S-adenosyl-L-homocysteine + H(+). RRNA N6-adenosine-methyltransferase activity is inhibited by zinc. Its function is as follows. Catalytic subunit of a heterodimer with TRMT112, which specifically methylates the 6th position of adenine in position 1832 of 18S rRNA. N6-methylation of adenine(1832) in 18S rRNA resides in the decoding center of 18S rRNA and is required for translation and embryonic stem cells (ESCs) pluripotency and differentiation. The chain is rRNA N(6)-adenosine-methyltransferase METTL5 from Homo sapiens (Human).